We begin with the raw amino-acid sequence, 1018 residues long: UPF0182 protein Francci3_3781 (1018 aa).

The next 7 membrane-spanning stretches (helical) occupy residues 13-33 (TKVLVPVLLVIVLAITIIAIF), 60-80 (ILLFVLFGVVMAIIVGTNIVL), 109-129 (MLLILLAVTTLFGLAAGLSAA), 167-187 (FLLGFLLTAVLLSLLVTLLTH), 208-228 (AHISVLLGLLALLKAWAYYLD), 250-270 (AVLPAKLILLFISLACAVLFI), and 283-303 (LGAGILVLSSVVIGGIYPAIV). 2 stretches are compositionally biased toward low complexity: residues 886–896 (TTDAGQDGTPA) and 960–980 (SSPAATPPAATATRAGASVPA). 2 disordered regions span residues 886–920 (TTDAGQDGTPAPRSGQGGAGVPPPGQTALQDAVGD) and 960–1018 (SSPA…PAPG). Residues 981–995 (SPVPASPAAKPPAPS) show a composition bias toward pro residues.

This sequence belongs to the UPF0182 family.

It localises to the cell membrane. In Frankia casuarinae (strain DSM 45818 / CECT 9043 / HFP020203 / CcI3), this protein is UPF0182 protein Francci3_3781.